The sequence spans 421 residues: Adenylosuccinate synthetase (421 aa).

GTP-binding positions include 11-17 and 39-41; these read GDEGKGK and GHT. Asp12 acts as the Proton acceptor in catalysis. Residues Asp12 and Gly39 each coordinate Mg(2+). IMP contacts are provided by residues 12–15, 37–40, Thr129, Arg143, Asn219, Thr234, and Arg298; these read DEGK and NAGH. His40 acts as the Proton donor in catalysis. 294 to 300 contacts substrate; it reads VTTGRRR. GTP-binding positions include Arg300, 326–328, and 409–411; these read KLD and GTG.

This sequence belongs to the adenylosuccinate synthetase family. As to quaternary structure, homodimer. Requires Mg(2+) as cofactor.

Its subcellular location is the cytoplasm. The enzyme catalyses IMP + L-aspartate + GTP = N(6)-(1,2-dicarboxyethyl)-AMP + GDP + phosphate + 2 H(+). The protein operates within purine metabolism; AMP biosynthesis via de novo pathway; AMP from IMP: step 1/2. Its function is as follows. Plays an important role in the de novo pathway and in the salvage pathway of purine nucleotide biosynthesis. Catalyzes the first committed step in the biosynthesis of AMP from IMP. In Paracoccidioides lutzii (strain ATCC MYA-826 / Pb01) (Paracoccidioides brasiliensis), this protein is Adenylosuccinate synthetase.